We begin with the raw amino-acid sequence, 165 residues long: Large ribosomal subunit protein uL10 (165 aa).

It belongs to the universal ribosomal protein uL10 family. In terms of assembly, part of the ribosomal stalk of the 50S ribosomal subunit. The N-terminus interacts with L11 and the large rRNA to form the base of the stalk. The C-terminus forms an elongated spine to which L12 dimers bind in a sequential fashion forming a multimeric L10(L12)X complex.

Functionally, forms part of the ribosomal stalk, playing a central role in the interaction of the ribosome with GTP-bound translation factors. This is Large ribosomal subunit protein uL10 from Citrobacter koseri (strain ATCC BAA-895 / CDC 4225-83 / SGSC4696).